The chain runs to 411 residues: MAAELTSTKLNAENHLLLDQPLLRLPHELARRNFKSVQRLVEREREYVIPALKEAANASLSNAQTPDQTLAALDSMLARMQNLKRKMESIQQEEKKVQNQSRKRIQHLEHLHQIPSLADVKYDQWSRIRLDRLVVDHMLRSGYTESAQQLAQEKGIEDLVDLDVFVQCQRIAQSLRRGETKDALQWCNENKAALKKSQFNLEFELRLQQYIEMLRTGDRGKLMDAMAHAKRYLTPYTETQSKEIHRAAGLLAFPQDTKAEPYKLTDLQSMYSFDRWNYLSDLFIRTHHELLSLPSSPLLHIALSAGLSALKTPSCHSAYTSSSSNFLSTTTSVCPICSTELNELARNMPYAHHAKSYVESDPIVLPNGRIYGQQRLLDMSKKLGCVETGKVKDPTTGEIFDKSEMKKVYIM.

In terms of domain architecture, LisH spans 133–165 (LVVDHMLRSGYTESAQQLAQEKGIEDLVDLDVF). The 58-residue stretch at 171 to 228 (IAQSLRRGETKDALQWCNENKAALKKSQFNLEFELRLQQYIEMLRTGDRGKLMDAMAH) folds into the CTLH domain. The segment at 334 to 396 (CPICSTELNE…ETGKVKDPTT (63 aa)) adopts an RING-Gid-type zinc-finger fold.

Belongs to the FYV10 family.

The protein localises to the cytoplasm. It is found in the nucleus. Involved in the proteasome-dependent degradation of fructose-1,6-bisphosphatase. This is Protein fyv10 (fyv10) from Aspergillus fumigatus (strain ATCC MYA-4609 / CBS 101355 / FGSC A1100 / Af293) (Neosartorya fumigata).